The sequence spans 91 residues: Small ribosomal subunit protein uS19 (91 aa).

It belongs to the universal ribosomal protein uS19 family.

Functionally, protein S19 forms a complex with S13 that binds strongly to the 16S ribosomal RNA. In Hahella chejuensis (strain KCTC 2396), this protein is Small ribosomal subunit protein uS19.